We begin with the raw amino-acid sequence, 193 residues long: ATP-dependent Clp protease proteolytic subunit (193 aa).

The active-site Nucleophile is serine 98. The active site involves histidine 123.

This sequence belongs to the peptidase S14 family. As to quaternary structure, fourteen ClpP subunits assemble into 2 heptameric rings which stack back to back to give a disk-like structure with a central cavity, resembling the structure of eukaryotic proteasomes.

Its subcellular location is the cytoplasm. The enzyme catalyses Hydrolysis of proteins to small peptides in the presence of ATP and magnesium. alpha-casein is the usual test substrate. In the absence of ATP, only oligopeptides shorter than five residues are hydrolyzed (such as succinyl-Leu-Tyr-|-NHMec, and Leu-Tyr-Leu-|-Tyr-Trp, in which cleavage of the -Tyr-|-Leu- and -Tyr-|-Trp bonds also occurs).. Its function is as follows. Cleaves peptides in various proteins in a process that requires ATP hydrolysis. Has a chymotrypsin-like activity. Plays a major role in the degradation of misfolded proteins. This chain is ATP-dependent Clp protease proteolytic subunit, found in Lachnospira eligens (strain ATCC 27750 / DSM 3376 / VPI C15-48 / C15-B4) (Eubacterium eligens).